We begin with the raw amino-acid sequence, 303 residues long: Deoxyhypusine hydroxylase (303 aa).

An N-acetylmethionine modification is found at M1. 6 HEAT-like PBS-type repeats span residues 23–49 (ARFR…AFDD), 54–80 (LKHE…VLRD), 87–113 (VRHE…YSTD), 175–201 (DRYR…GLRC), 206–232 (FRHE…ALAQ), and 239–265 (VRHE…HVAD). 3 residues coordinate Fe cation: H56, H89, and E90. Residues H208, H241, and E242 each contribute to the Fe cation site.

It belongs to the deoxyhypusine hydroxylase family. Fe(2+) serves as cofactor.

The enzyme catalyses [eIF5A protein]-deoxyhypusine + AH2 + O2 = [eIF5A protein]-hypusine + A + H2O. It participates in protein modification; eIF5A hypusination. Catalyzes the hydroxylation of the N(6)-(4-aminobutyl)-L-lysine intermediate produced by deoxyhypusine synthase/DHPS on a critical lysine of the eukaryotic translation initiation factor 5A/eIF-5A. This is the second step of the post-translational modification of that lysine into an unusual amino acid residue named hypusine. Hypusination is unique to mature eIF-5A factor and is essential for its function. This Bos taurus (Bovine) protein is Deoxyhypusine hydroxylase.